Here is a 311-residue protein sequence, read N- to C-terminus: Elongation factor Ts (311 aa).

The interval 81–84 is involved in Mg(2+) ion dislocation from EF-Tu; that stretch reads TDFV.

Belongs to the EF-Ts family.

Its subcellular location is the cytoplasm. Its function is as follows. Associates with the EF-Tu.GDP complex and induces the exchange of GDP to GTP. It remains bound to the aminoacyl-tRNA.EF-Tu.GTP complex up to the GTP hydrolysis stage on the ribosome. This chain is Elongation factor Ts, found in Trichlorobacter lovleyi (strain ATCC BAA-1151 / DSM 17278 / SZ) (Geobacter lovleyi).